The sequence spans 287 residues: Nucleotide-binding protein GM21_3387 (287 aa).

Residue 8-15 (GLSGSGKS) coordinates ATP. GTP is bound at residue 59–62 (DIRS).

This sequence belongs to the RapZ-like family.

Functionally, displays ATPase and GTPase activities. The sequence is that of Nucleotide-binding protein GM21_3387 from Geobacter sp. (strain M21).